We begin with the raw amino-acid sequence, 418 residues long: Alpha-tubulin N-acetyltransferase 1 (418 aa).

One can recognise an N-acetyltransferase domain in the interval 1-186 (MEFEFDVHKI…NNFVVFEGFF (186 aa)). Acetyl-CoA is bound by residues 120–133 (FYIHESLQRHGFGK) and 156–165 (SEKFLSFLRK). Disordered stretches follow at residues 237–292 (SSLG…MNLS) and 322–353 (QIKEQQSRTDSSAQEGRTQDRPNGSNSQHQND). Basic and acidic residues predominate over residues 277-287 (QEDHSQRRRTS). The segment covering 329–353 (RTDSSAQEGRTQDRPNGSNSQHQND) has biased composition (polar residues).

It belongs to the acetyltransferase ATAT1 family.

The protein resides in the cytoplasm. It is found in the membrane. Its subcellular location is the clathrin-coated pit. The protein localises to the cell junction. It localises to the focal adhesion. The protein resides in the cell projection. It is found in the axon. Its subcellular location is the cytoskeleton. The protein localises to the spindle. The enzyme catalyses L-lysyl-[alpha-tubulin] + acetyl-CoA = N(6)-acetyl-L-lysyl-[alpha-tubulin] + CoA + H(+). Its function is as follows. Specifically acetylates 'Lys-40' in alpha-tubulin on the lumenal side of microtubules. Promotes microtubule destabilization and accelerates microtubule dynamics; this activity may be independent of acetylation activity. Acetylates alpha-tubulin with a slow enzymatic rate, due to a catalytic site that is not optimized for acetyl transfer. Enters the microtubule through each end and diffuses quickly throughout the lumen of microtubules. Acetylates only long/old microtubules because of its slow acetylation rate since it does not have time to act on dynamically unstable microtubules before the enzyme is released. May be involved in neuron development. The sequence is that of Alpha-tubulin N-acetyltransferase 1 from Xenopus laevis (African clawed frog).